We begin with the raw amino-acid sequence, 181 residues long: Acireductone dioxygenase (181 aa).

Positions 97, 99, 103, and 141 each coordinate Fe(2+). 4 residues coordinate Ni(2+): His-97, His-99, Glu-103, and His-141.

Belongs to the acireductone dioxygenase (ARD) family. As to quaternary structure, monomer. Fe(2+) is required as a cofactor. Ni(2+) serves as cofactor.

It carries out the reaction 1,2-dihydroxy-5-(methylsulfanyl)pent-1-en-3-one + O2 = 3-(methylsulfanyl)propanoate + CO + formate + 2 H(+). The enzyme catalyses 1,2-dihydroxy-5-(methylsulfanyl)pent-1-en-3-one + O2 = 4-methylsulfanyl-2-oxobutanoate + formate + 2 H(+). Its pathway is amino-acid biosynthesis; L-methionine biosynthesis via salvage pathway; L-methionine from S-methyl-5-thio-alpha-D-ribose 1-phosphate: step 5/6. Functionally, catalyzes 2 different reactions between oxygen and the acireductone 1,2-dihydroxy-3-keto-5-methylthiopentene (DHK-MTPene) depending upon the metal bound in the active site. Fe-containing acireductone dioxygenase (Fe-ARD) produces formate and 2-keto-4-methylthiobutyrate (KMTB), the alpha-ketoacid precursor of methionine in the methionine recycle pathway. Ni-containing acireductone dioxygenase (Ni-ARD) produces methylthiopropionate, carbon monoxide and formate, and does not lie on the methionine recycle pathway. The chain is Acireductone dioxygenase from Pseudomonas fluorescens (strain ATCC BAA-477 / NRRL B-23932 / Pf-5).